The following is a 484-amino-acid chain: Sodium-dependent glucose transporter 1 (484 aa).

Residue Ser6 is modified to Phosphoserine. The next 12 helical transmembrane spans lie at 40-60 (WFTT…AAVL), 80-100 (EIFV…GVLF), 106-126 (FLLL…TPFC), 135-155 (MMSI…VLIL), 168-188 (ALHF…KLAW), 227-247 (LLWA…FLFA), 274-294 (ALLC…VTYG), 317-337 (SIFW…ATLL), 340-360 (GTMM…LVLF), 366-386 (CLWI…PSGI), 401-421 (AFIL…SGIL), and 428-448 (LPVI…LFPV).

Belongs to the major facilitator superfamily. In terms of tissue distribution, expressed in brain, liver, lung, and kidney. In kidney expressed in cortex and inner medulla, in ascending thin limbs (ATLs) and lower descending thin limbs (DTLs). Primarily expressed in the proximal tubules of the kidney.

The protein resides in the apical cell membrane. Functionally, may function as a sodium-dependent glucose transporter. Potential channels for urea in the inner medulla of kidney. The protein is Sodium-dependent glucose transporter 1 of Rattus norvegicus (Rat).